The chain runs to 362 residues: MERIVVTLGERSYPITIASGLFNEPASFLPLKSGEQVMLVTNETLAPLYLDKVRGVLEQAGVNVDSVILPDGEQYKSLAVLDTVFTALLQKPHGRDTTLVALGGGVVGDLTGFAAASYQRGVRFIQVPTTLLSQVDSSVGGKTAVNHPLGKNMIGAFYQPASVVVDLDCLKTLPPRELASGLAEVIKYGIILDGAFFNWLEENLDALLRLDGPAMAYCIRRCCELKAEVVAADERETGLRALLNLGHTFGHAIEAEMGYGNWLHGEAVAAGMVMAARTSERLGQFSSAETQRIITLLKRAGLPVNGPREMSAQAYLPHMLRDKKVLAGEMRLILPLAIGKSEVRSGVSHELVLNAIADCQSA.

NAD(+) contacts are provided by residues 71 to 76, 105 to 109, 129 to 130, K142, K151, and 169 to 172; these read DGEQYK, GVVGD, TT, and CLKT. Positions 184, 247, and 264 each coordinate Zn(2+).

Belongs to the sugar phosphate cyclases superfamily. Dehydroquinate synthase family. Co(2+) serves as cofactor. It depends on Zn(2+) as a cofactor. The cofactor is NAD(+).

It is found in the cytoplasm. The catalysed reaction is 7-phospho-2-dehydro-3-deoxy-D-arabino-heptonate = 3-dehydroquinate + phosphate. It participates in metabolic intermediate biosynthesis; chorismate biosynthesis; chorismate from D-erythrose 4-phosphate and phosphoenolpyruvate: step 2/7. Functionally, catalyzes the conversion of 3-deoxy-D-arabino-heptulosonate 7-phosphate (DAHP) to dehydroquinate (DHQ). The sequence is that of 3-dehydroquinate synthase from Escherichia coli (strain K12 / MC4100 / BW2952).